Consider the following 442-residue polypeptide: Exodeoxyribonuclease 7 large subunit (442 aa).

It belongs to the XseA family. As to quaternary structure, heterooligomer composed of large and small subunits.

The protein resides in the cytoplasm. The enzyme catalyses Exonucleolytic cleavage in either 5'- to 3'- or 3'- to 5'-direction to yield nucleoside 5'-phosphates.. Functionally, bidirectionally degrades single-stranded DNA into large acid-insoluble oligonucleotides, which are then degraded further into small acid-soluble oligonucleotides. The polypeptide is Exodeoxyribonuclease 7 large subunit (Rickettsia bellii (strain OSU 85-389)).